Consider the following 380-residue polypeptide: Cytochrome b (380 aa).

The next 4 helical transmembrane spans lie at Phe-34–Ala-54, Trp-78–Ile-99, Trp-114–Leu-134, and Phe-179–Thr-199. Heme b contacts are provided by His-84 and His-98. Residues His-183 and His-197 each coordinate heme b. An a ubiquinone-binding site is contributed by His-202. A run of 4 helical transmembrane segments spans residues Leu-227–Ser-247, Leu-289–His-309, Phe-321–Ser-341, and Phe-348–Pro-368.

It belongs to the cytochrome b family. The cytochrome bc1 complex contains 11 subunits: 3 respiratory subunits (MT-CYB, CYC1 and UQCRFS1), 2 core proteins (UQCRC1 and UQCRC2) and 6 low-molecular weight proteins (UQCRH/QCR6, UQCRB/QCR7, UQCRQ/QCR8, UQCR10/QCR9, UQCR11/QCR10 and a cleavage product of UQCRFS1). This cytochrome bc1 complex then forms a dimer. It depends on heme b as a cofactor.

It localises to the mitochondrion inner membrane. In terms of biological role, component of the ubiquinol-cytochrome c reductase complex (complex III or cytochrome b-c1 complex) that is part of the mitochondrial respiratory chain. The b-c1 complex mediates electron transfer from ubiquinol to cytochrome c. Contributes to the generation of a proton gradient across the mitochondrial membrane that is then used for ATP synthesis. This chain is Cytochrome b (MT-CYB), found in Antigone antigone (Sarus crane).